The chain runs to 148 residues: Lysozyme-like protein 6 (148 aa).

The N-terminal stretch at 1 to 19 (MTSPLLISLASCLVAVNQA) is a signal peptide. One can recognise a C-type lysozyme domain in the interval 20-148 (SLIGRCDLAK…SYWMTGCHLA (129 aa)). Disulfide bonds link C25/C145, C49/C133, C83/C98, and C94/C112. Catalysis depends on residues E54 and D71.

It belongs to the glycosyl hydrolase 22 family. In terms of assembly, monomer.

It is found in the secreted. It localises to the cell surface. The protein localises to the cell projection. Its subcellular location is the cilium. The protein resides in the flagellum. The catalysed reaction is Hydrolysis of (1-&gt;4)-beta-linkages between N-acetylmuramic acid and N-acetyl-D-glucosamine residues in a peptidoglycan and between N-acetyl-D-glucosamine residues in chitodextrins.. In terms of biological role, may be involved sperm-egg plasma membrane adhesion and fusion during fertilization. Exhibits bacteriolytic activity in vitro against Micrococcus luteus and Staphylococcus aureus. Shows weak bacteriolytic activity against Gram-positive bacteria at physiological pH. Bacteriolytic activity is pH-dependent, with a maximum at around pH 5.6. The chain is Lysozyme-like protein 6 (LYZL6) from Bos taurus (Bovine).